Consider the following 337-residue polypeptide: UDP-3-O-acylglucosamine N-acyltransferase (337 aa).

H238 serves as the catalytic Proton acceptor.

The protein belongs to the transferase hexapeptide repeat family. LpxD subfamily. Homotrimer.

It catalyses the reaction a UDP-3-O-[(3R)-3-hydroxyacyl]-alpha-D-glucosamine + a (3R)-hydroxyacyl-[ACP] = a UDP-2-N,3-O-bis[(3R)-3-hydroxyacyl]-alpha-D-glucosamine + holo-[ACP] + H(+). It functions in the pathway bacterial outer membrane biogenesis; LPS lipid A biosynthesis. Catalyzes the N-acylation of UDP-3-O-acylglucosamine using 3-hydroxyacyl-ACP as the acyl donor. Is involved in the biosynthesis of lipid A, a phosphorylated glycolipid that anchors the lipopolysaccharide to the outer membrane of the cell. The chain is UDP-3-O-acylglucosamine N-acyltransferase from Xanthomonas axonopodis pv. citri (strain 306).